A 601-amino-acid polypeptide reads, in one-letter code: FAD-binding monooxygenase stcW (601 aa).

Residues Phe42 to Ser43, Glu64, Trp73, Asp84, Tyr90, and Val133 each bind FAD.

This sequence belongs to the FAD-binding monooxygenase family. The cofactor is FAD.

The protein operates within mycotoxin biosynthesis; sterigmatocystin biosynthesis. Functionally, FAD-binding monooxygenase; part of the gene cluster that mediates the biosynthesis of sterigmatocystin (ST), a polyketide-derived furanocoumarin which is part of the most toxic and carcinogenic compounds among the known mycotoxins. The first step in the biosynthesis of sterigmatocystin is the production of hexanoate by the fatty acid synthase (FAS) units stcJ and stcK. The polyketide backbone is assembled by the non-reducing polyketide synthase stcA by condensation of the starter hexanoyl-CoA and 7 malonyl-CoA extender units followed by cyclization and release of norsolorinic acid. Norsolorinic acid is the first stable intermediate in the biosynthesis of sterigmatocystin and is converted into averantin (AVN) by the ketoreductase stcE which reduces the hexanoate ketone to an alcohol. Averantin is then oxidized into 5'-hydroxyaverantin (HAVN) by the cytochrome P450 monooxygenase stcF. 5'-hydroxyaverantin is further converted to 5'-oxyaverantin (OAVN) by the 5'-hydroxyaverantin dehydrogenase stcG. The next step is the conversion of OAVN into averufin (AVF) which is catalyzed by a yet to be identified enzyme. The cytochrome P450 monooxygenase stcB and the flavin-binding monooxygenase stcW are both required for the conversion of averufin to 1-hydroxyversicolorone. The esterase stcI probably catalyzes the formation of versiconal hemiacetal acetate from 1-hydroxyversicolorone. The oxydoreductase stcN then probably catalyzes the biosynthetic step from versiconal to versicolorin B (VERB). The next step is performed by the versicolorin B desaturase stcL to produce versicolorin A (VERA). The ketoreductase stcU and the cytochrome P450 monooxygenase stcS are involved in the conversion of versicolorin A to demethylsterigmatocystin. The Baeyer-Villiger oxidas stcQ and the reductase stcR might be involved in the biosynthetic step from versicolorin A to demethylsterigmatocystin. The final step in the biosynthesis of sterigmatocystin is the methylation of demethylsterigmatocystin catalyzed by the methyltransferase stcP. The polypeptide is FAD-binding monooxygenase stcW (Emericella nidulans (strain FGSC A4 / ATCC 38163 / CBS 112.46 / NRRL 194 / M139) (Aspergillus nidulans)).